The following is a 506-amino-acid chain: 2-isopropylmalate synthase (506 aa).

A Pyruvate carboxyltransferase domain is found at 4–266 (ILFMDTTLRD…EPSMTLKEIK (263 aa)). Asp13, His201, His203, and Asn237 together coordinate Mn(2+). The segment at 390–506 (NITQLQVHFV…KLKSFIQLVK (117 aa)) is regulatory domain.

Belongs to the alpha-IPM synthase/homocitrate synthase family. LeuA type 1 subfamily. In terms of assembly, homodimer. It depends on Mn(2+) as a cofactor.

Its subcellular location is the cytoplasm. It catalyses the reaction 3-methyl-2-oxobutanoate + acetyl-CoA + H2O = (2S)-2-isopropylmalate + CoA + H(+). The protein operates within amino-acid biosynthesis; L-leucine biosynthesis; L-leucine from 3-methyl-2-oxobutanoate: step 1/4. In terms of biological role, catalyzes the condensation of the acetyl group of acetyl-CoA with 3-methyl-2-oxobutanoate (2-ketoisovalerate) to form 3-carboxy-3-hydroxy-4-methylpentanoate (2-isopropylmalate). The sequence is that of 2-isopropylmalate synthase from Bacillus cereus (strain AH820).